A 688-amino-acid polypeptide reads, in one-letter code: Bifunctional protein GAL10 (688 aa).

The interval 1–346 is galactowaldenase; it reads MSEDKYCLVT…TQDNPFGYQI (346 aa). 6–37 is a binding site for NAD(+); it reads YCLVTGGAGYIGSHTVVELCEAGYKCIVVDNL. The tract at residues 347–688 is mutarotase; the sequence is KGVDSKFFGD…HKLSYTFRTL (342 aa). His-525 functions as the For mutarotase activity in the catalytic mechanism.

In the N-terminal section; belongs to the NAD(P)-dependent epimerase/dehydratase family. It in the C-terminal section; belongs to the aldose epimerase family. It depends on NAD(+) as a cofactor.

The enzyme catalyses UDP-alpha-D-glucose = UDP-alpha-D-galactose. It catalyses the reaction alpha-D-glucose = beta-D-glucose. It functions in the pathway carbohydrate metabolism; galactose metabolism. It participates in carbohydrate metabolism; hexose metabolism. Mutarotase converts alpha-aldose to the beta-anomer. It is active on D-glucose, L-arabinose, D-xylose, D-galactose, maltose and lactose. The sequence is that of Bifunctional protein GAL10 (GAL10) from Kluyveromyces lactis (strain ATCC 8585 / CBS 2359 / DSM 70799 / NBRC 1267 / NRRL Y-1140 / WM37) (Yeast).